A 266-amino-acid chain; its full sequence is Putative carbamate hydrolase RutD (266 aa).

The 225-residue stretch at 15–239 (PVVVLSAGLG…RVEMPWGGHA (225 aa)) folds into the AB hydrolase-1 domain.

The protein belongs to the AB hydrolase superfamily. Hydrolase RutD family.

It catalyses the reaction carbamate + 2 H(+) = NH4(+) + CO2. In terms of biological role, involved in pyrimidine catabolism. May facilitate the hydrolysis of carbamate, a reaction that can also occur spontaneously. The sequence is that of Putative carbamate hydrolase RutD from Klebsiella variicola (strain At-22).